We begin with the raw amino-acid sequence, 134 residues long: Phosphoribosyl-AMP cyclohydrolase (134 aa).

Residue Asp80 participates in Mg(2+) binding. Residue Cys81 coordinates Zn(2+). Asp82 and Asp84 together coordinate Mg(2+). Residues Cys98 and Cys105 each coordinate Zn(2+).

It belongs to the PRA-CH family. Homodimer. It depends on Mg(2+) as a cofactor. Requires Zn(2+) as cofactor.

It localises to the cytoplasm. It catalyses the reaction 1-(5-phospho-beta-D-ribosyl)-5'-AMP + H2O = 1-(5-phospho-beta-D-ribosyl)-5-[(5-phospho-beta-D-ribosylamino)methylideneamino]imidazole-4-carboxamide. The protein operates within amino-acid biosynthesis; L-histidine biosynthesis; L-histidine from 5-phospho-alpha-D-ribose 1-diphosphate: step 3/9. Its function is as follows. Catalyzes the hydrolysis of the adenine ring of phosphoribosyl-AMP. The chain is Phosphoribosyl-AMP cyclohydrolase from Bordetella avium (strain 197N).